A 525-amino-acid polypeptide reads, in one-letter code: MATLLRSKLSNVATSVSNKSQAKVSGMFARMGFQAATDEEAVGFAHCDDLDFEHRQGLQMDILKAEGEPCGDEGAEPPVEGDIHYQRGSGAPLPPSGSKDQVGAGGEFGGHDKPKITAWEAGWNVTNAIQGMFVLGLPYAILHGGYLGLFLIIFAAVVCCYTGKILIACLYEENEDGEVVRVRDSYVAIANACCAPRFPTLGGRVVNVAQIIELVMTCILYVVVSGNLMYNSFPGLPVSQKSWSIIATAVLLPCAFLKNLKAVSKFSLLCTLAHFVINILVIAYCLSRARDWAWEKVKFYIDVKKFPISIGIIVFSYTSQIFLPSLEGNMQQPSEFHCMMNWTHIAACVLKGLFALVAYLTWADETKEVITDNLPGSIRAVVNIFLVAKALLSYPLPFFAAVEVLEKSLFQEGSRAFFPACYGGDGRLKSWGLTLRCALVVFTLLMAIYVPHFALLMGLTGSLTGAGLCFLLPSLFHLRLLWRKLLWHQVFFDVAIFVIGGICSVSGFVHSLEGLIEAYRTNAED.

Topologically, residues 1–132 (MATLLRSKLS…WNVTNAIQGM (132 aa)) are cytoplasmic. The tract at residues 69–111 (PCGDEGAEPPVEGDIHYQRGSGAPLPPSGSKDQVGAGGEFGGH) is disordered. A helical transmembrane segment spans residues 133–153 (FVLGLPYAILHGGYLGLFLII). The Lumenal, vesicle portion of the chain corresponds to 154-204 (FAAVVCCYTGKILIACLYEENEDGEVVRVRDSYVAIANACCAPRFPTLGGR). Tyr-186 carries the 3'-nitrotyrosine modification. The helical transmembrane segment at 205-225 (VVNVAQIIELVMTCILYVVVS) threads the bilayer. Topologically, residues 226–265 (GNLMYNSFPGLPVSQKSWSIIATAVLLPCAFLKNLKAVSK) are cytoplasmic. A helical membrane pass occupies residues 266 to 286 (FSLLCTLAHFVINILVIAYCL). Over 287–305 (SRARDWAWEKVKFYIDVKK) the chain is Lumenal, vesicle. A helical transmembrane segment spans residues 306–326 (FPISIGIIVFSYTSQIFLPSL). The Cytoplasmic portion of the chain corresponds to 327 to 341 (EGNMQQPSEFHCMMN). The helical transmembrane segment at 342-362 (WTHIAACVLKGLFALVAYLTW) threads the bilayer. The Lumenal, vesicle portion of the chain corresponds to 363 to 383 (ADETKEVITDNLPGSIRAVVN). Residues 384–404 (IFLVAKALLSYPLPFFAAVEV) form a helical membrane-spanning segment. The Cytoplasmic portion of the chain corresponds to 405–438 (LEKSLFQEGSRAFFPACYGGDGRLKSWGLTLRCA). Residues 439 to 459 (LVVFTLLMAIYVPHFALLMGL) form a helical membrane-spanning segment. Over 460-461 (TG) the chain is Lumenal, vesicle. The chain crosses the membrane as a helical span at residues 462–482 (SLTGAGLCFLLPSLFHLRLLW). Topologically, residues 483–489 (RKLLWHQ) are cytoplasmic. Residues 490 to 510 (VFFDVAIFVIGGICSVSGFVH) form a helical membrane-spanning segment. Topologically, residues 511 to 525 (SLEGLIEAYRTNAED) are lumenal, vesicle.

Belongs to the amino acid/polyamine transporter 2 family.

It localises to the cytoplasmic vesicle membrane. The protein resides in the presynapse. The catalysed reaction is 4-aminobutanoate(out) + n H(+)(in) = 4-aminobutanoate(in) + n H(+)(out). It carries out the reaction glycine(out) + n H(+)(in) = glycine(in) + n H(+)(out). The enzyme catalyses beta-alanine(out) + n H(+)(in) = beta-alanine(in) + n H(+)(out). Antiporter that exchanges vesicular protons for cytosolic 4-aminobutanoate or to a lesser extend glycine, thus allowing their secretion from nerve terminals. The transport is equally dependent on the chemical and electrical components of the proton gradient. May also transport beta-alanine. Acidification of GABAergic synaptic vesicles is a prerequisite for 4-aminobutanoate uptake. This Macaca fascicularis (Crab-eating macaque) protein is Vesicular inhibitory amino acid transporter.